The sequence spans 469 residues: Putative dipeptidase SAB1611c (469 aa).

Residue His84 coordinates Zn(2+). Asp86 is a catalytic residue. Asp115 provides a ligand contact to Zn(2+). Glu149 (proton acceptor) is an active-site residue. Zn(2+)-binding residues include Glu150, Asp173, and His440.

Belongs to the peptidase M20A family. Zn(2+) serves as cofactor.

The chain is Putative dipeptidase SAB1611c from Staphylococcus aureus (strain bovine RF122 / ET3-1).